Reading from the N-terminus, the 179-residue chain is Large ribosomal subunit protein uL5 (179 aa).

It belongs to the universal ribosomal protein uL5 family. In terms of assembly, part of the 50S ribosomal subunit; part of the 5S rRNA/L5/L18/L25 subcomplex. Contacts the 5S rRNA and the P site tRNA. Forms a bridge to the 30S subunit in the 70S ribosome.

Its function is as follows. This is one of the proteins that bind and probably mediate the attachment of the 5S RNA into the large ribosomal subunit, where it forms part of the central protuberance. In the 70S ribosome it contacts protein S13 of the 30S subunit (bridge B1b), connecting the 2 subunits; this bridge is implicated in subunit movement. Contacts the P site tRNA; the 5S rRNA and some of its associated proteins might help stabilize positioning of ribosome-bound tRNAs. This is Large ribosomal subunit protein uL5 from Anaplasma marginale (strain Florida).